We begin with the raw amino-acid sequence, 244 residues long: Dehydration-responsive element-binding protein 2E (244 aa).

The tract at residues 1-25 (MEKEDNGSKQSSSASVVSSRRRRRV) is disordered. Residues 20–46 (RRRRRVVEPVEATLQRWEEEGLARARR) carry the Nuclear localization signal motif. A DNA-binding region (AP2/ERF) is located at residues 69–134 (RFRGVRQRVW…YGPYARLNFP (66 aa)).

Belongs to the AP2/ERF transcription factor family. ERF subfamily. In terms of tissue distribution, expressed in xylem tissues, stigma, anthers and region where sepals and petals attach the peduncle.

The protein resides in the nucleus. Its function is as follows. Transcriptional activator that binds specifically to the DNA sequence 5'-[AG]CCGAC-3'. Binding to the C-repeat/DRE element mediates abscisic acid-inducible transcription. Involved in the regulation of plant development and tolerance to abiotic stresses. The sequence is that of Dehydration-responsive element-binding protein 2E (DREB2E) from Arabidopsis thaliana (Mouse-ear cress).